The following is a 31-amino-acid chain: Photosystem II reaction center protein T (31 aa).

The chain crosses the membrane as a helical span at residues 3–23; the sequence is SFAYILILTLAIATLFFAIAF.

It belongs to the PsbT family. PSII is composed of 1 copy each of membrane proteins PsbA, PsbB, PsbC, PsbD, PsbE, PsbF, PsbH, PsbI, PsbJ, PsbK, PsbL, PsbM, PsbT, PsbX, PsbY, PsbZ, Psb30/Ycf12, peripheral proteins PsbO, CyanoQ (PsbQ), PsbU, PsbV and a large number of cofactors. It forms dimeric complexes.

It localises to the cellular thylakoid membrane. In terms of biological role, found at the monomer-monomer interface of the photosystem II (PS II) dimer, plays a role in assembly and dimerization of PSII. PSII is a light-driven water plastoquinone oxidoreductase, using light energy to abstract electrons from H(2)O, generating a proton gradient subsequently used for ATP formation. The protein is Photosystem II reaction center protein T of Synechococcus sp. (strain WH7803).